A 628-amino-acid chain; its full sequence is EIN3-binding F-box protein 1 (628 aa).

Residues 61 to 109 form the F-box domain; the sequence is PVSIDVLPDECLFEIFRRLSGPQERSACAFVSKQWLTLVSSIRQKEIDV.

Part of a SCF (SKP1-cullin-F-box) protein ligase complex. Interacts with CUL1, SKP1A/ASK1, SKP1B/ASK2, ASK11, ASK12, ASK13, ASK18, EIN3, and EIL1. As to expression, ubiquitous.

The protein resides in the nucleus. The protein operates within protein modification; protein ubiquitination. Functionally, component of SCF(EBF1) E3 ubiquitin ligase complexes, which may mediate the ubiquitination and subsequent proteasomal degradation of target proteins (probably including EIN3 and EIL1). Regulator of the ethylene signaling cascade by modulating the stability of EIN3 and EIL1 proteins. Confers insensitivity to ethylene. This is EIN3-binding F-box protein 1 (EBF1) from Arabidopsis thaliana (Mouse-ear cress).